A 513-amino-acid chain; its full sequence is ATP synthase subunit alpha (513 aa).

ATP is bound at residue 169–176 (GDRQTGKT).

Belongs to the ATPase alpha/beta chains family. As to quaternary structure, F-type ATPases have 2 components, CF(1) - the catalytic core - and CF(0) - the membrane proton channel. CF(1) has five subunits: alpha(3), beta(3), gamma(1), delta(1), epsilon(1). CF(0) has three main subunits: a(1), b(2) and c(9-12). The alpha and beta chains form an alternating ring which encloses part of the gamma chain. CF(1) is attached to CF(0) by a central stalk formed by the gamma and epsilon chains, while a peripheral stalk is formed by the delta and b chains.

It is found in the cell inner membrane. The enzyme catalyses ATP + H2O + 4 H(+)(in) = ADP + phosphate + 5 H(+)(out). Functionally, produces ATP from ADP in the presence of a proton gradient across the membrane. The alpha chain is a regulatory subunit. The polypeptide is ATP synthase subunit alpha (Dichelobacter nodosus (strain VCS1703A)).